The chain runs to 184 residues: CDP-archaeol synthase (184 aa).

A run of 5 helical transmembrane segments spans residues Ile-4 to Ala-24, Phe-54 to Ile-74, Ile-86 to Thr-106, Gly-122 to Ala-142, and Phe-145 to Pro-165.

The protein belongs to the CDP-archaeol synthase family. Requires Mg(2+) as cofactor.

The protein localises to the cell membrane. The catalysed reaction is 2,3-bis-O-(geranylgeranyl)-sn-glycerol 1-phosphate + CTP + H(+) = CDP-2,3-bis-O-(geranylgeranyl)-sn-glycerol + diphosphate. It participates in membrane lipid metabolism; glycerophospholipid metabolism. Catalyzes the formation of CDP-2,3-bis-(O-geranylgeranyl)-sn-glycerol (CDP-archaeol) from 2,3-bis-(O-geranylgeranyl)-sn-glycerol 1-phosphate (DGGGP) and CTP. This reaction is the third ether-bond-formation step in the biosynthesis of archaeal membrane lipids. The polypeptide is CDP-archaeol synthase (Picrophilus torridus (strain ATCC 700027 / DSM 9790 / JCM 10055 / NBRC 100828 / KAW 2/3)).